A 634-amino-acid chain; its full sequence is MINIRFPDGSIREFEAGVNSLDVAKSISPSLAKATMAAYIDDQLKDAKDAINSNCELRLITVKDPEGLEILRHSCAHLLAHAVKELYPNTEVTIGPVVDNGFYYDFSFKESIGEADLPTIEKKMKELAKKSAPVSYRVVPKTEAIEFFKAQGENYKVEIIDSIADEQMKIYTQDNFSDLCRGPHIPNTSVLKAFKLTKLAGAYWRGNSDNEMLTRIYGTCWATKEDLEQYLNMLEEAEKRDHRKIGKVLDLFHFQEDSPGIAFWHDNGVRIWRQVEDYMRASNNKYGCSEIRTPLIADFSLWQKSGHASKYAENMFATKSENRDFAIRPMNCPTCVQVYNTKLHSYRDLPIRMAEFGIVHRNEPSGSLHGLLRVRSFTQDDGHIFCTPEQVEEEVILMVQQCFEVYKDFGFNDFAVKIALRPENRIGDDETWDKSEQILKNALDANNVSYELFPGEGAFYGPKIEFHLKDAIGRSWQCGTIQLDFSMPQRLGATYIDKNGEKQVSVMLHRAIVGSLERFIGMLIEHYAGNLPLWLAPVQVAVMGISNNQDDYCKEVFIMLEKNGIRAKLDLRNEKIGFKIREHTLLRVPYLVILGKNEQEQKIITIRKHSGEDLGQMSVDDFCAFLDKQIQAKE.

The TGS domain maps to 1 to 61 (MINIRFPDGS…NSNCELRLIT (61 aa)). A catalytic region spans residues 241–532 (DHRKIGKVLD…LIEHYAGNLP (292 aa)). Residues cysteine 332, histidine 383, and histidine 509 each coordinate Zn(2+).

It belongs to the class-II aminoacyl-tRNA synthetase family. Homodimer. The cofactor is Zn(2+).

The protein resides in the cytoplasm. It catalyses the reaction tRNA(Thr) + L-threonine + ATP = L-threonyl-tRNA(Thr) + AMP + diphosphate + H(+). Its function is as follows. Catalyzes the attachment of threonine to tRNA(Thr) in a two-step reaction: L-threonine is first activated by ATP to form Thr-AMP and then transferred to the acceptor end of tRNA(Thr). Also edits incorrectly charged L-seryl-tRNA(Thr). This chain is Threonine--tRNA ligase, found in Francisella tularensis subsp. holarctica (strain OSU18).